The sequence spans 450 residues: Phosphoglucosamine mutase (450 aa).

Ser102 (phosphoserine intermediate) is an active-site residue. The Mg(2+) site is built by Ser102, Asp244, Asp246, and Asp248. Ser102 is modified (phosphoserine).

Belongs to the phosphohexose mutase family. Requires Mg(2+) as cofactor. Activated by phosphorylation.

The catalysed reaction is alpha-D-glucosamine 1-phosphate = D-glucosamine 6-phosphate. Catalyzes the conversion of glucosamine-6-phosphate to glucosamine-1-phosphate. The protein is Phosphoglucosamine mutase of Bartonella bacilliformis (strain ATCC 35685 / KC583 / Herrer 020/F12,63).